Reading from the N-terminus, the 592-residue chain is UvrABC system protein C (592 aa).

Residues 15 to 92 enclose the GIY-YIG domain; it reads ALPGCYLMKD…IQKHQPYFNI (78 aa). One can recognise a UVR domain in the interval 197 to 232; the sequence is DNVKKDLTEKMATAAQEMQFERAAELRDQLRYIEAT.

This sequence belongs to the UvrC family. In terms of assembly, interacts with UvrB in an incision complex.

It is found in the cytoplasm. The UvrABC repair system catalyzes the recognition and processing of DNA lesions. UvrC both incises the 5' and 3' sides of the lesion. The N-terminal half is responsible for the 3' incision and the C-terminal half is responsible for the 5' incision. In Latilactobacillus sakei subsp. sakei (strain 23K) (Lactobacillus sakei subsp. sakei), this protein is UvrABC system protein C.